The chain runs to 201 residues: NADH-quinone oxidoreductase subunit C (201 aa).

Belongs to the complex I 30 kDa subunit family. As to quaternary structure, NDH-1 is composed of 14 different subunits. Subunits NuoB, C, D, E, F, and G constitute the peripheral sector of the complex.

The protein localises to the cell inner membrane. It carries out the reaction a quinone + NADH + 5 H(+)(in) = a quinol + NAD(+) + 4 H(+)(out). Its function is as follows. NDH-1 shuttles electrons from NADH, via FMN and iron-sulfur (Fe-S) centers, to quinones in the respiratory chain. The immediate electron acceptor for the enzyme in this species is believed to be ubiquinone. Couples the redox reaction to proton translocation (for every two electrons transferred, four hydrogen ions are translocated across the cytoplasmic membrane), and thus conserves the redox energy in a proton gradient. In Dechloromonas aromatica (strain RCB), this protein is NADH-quinone oxidoreductase subunit C.